A 972-amino-acid polypeptide reads, in one-letter code: Coatomer subunit beta (972 aa).

HEAT repeat units lie at residues 79–113 (LLYF…DLQH), 133–170 (ELLE…VSEH), 317–354 (GCLE…SRNI), 397–434 (EIAA…LYPQ), and 481–518 (RQSI…QAGP). Residues 494–522 (LKNQRKSQDEDDEATEESATKQAGPVILP) are disordered.

Oligomeric complex that consists of at least the alpha, beta, beta', gamma, delta, epsilon and zeta subunits.

Its subcellular location is the cytoplasm. The protein localises to the golgi apparatus membrane. It localises to the cytoplasmic vesicle. It is found in the COPI-coated vesicle membrane. Functionally, the coatomer is a cytosolic protein complex that binds to dilysine motifs and reversibly associates with Golgi non-clathrin-coated vesicles, which further mediate biosynthetic protein transport from the ER, via the Golgi up to the trans Golgi network. Coatomer complex is required for budding from Golgi membranes, and is essential for the retrograde Golgi-to-ER transport of dilysine-tagged proteins. This chain is Coatomer subunit beta, found in Candida glabrata (strain ATCC 2001 / BCRC 20586 / JCM 3761 / NBRC 0622 / NRRL Y-65 / CBS 138) (Yeast).